Reading from the N-terminus, the 149-residue chain is Large ribosomal subunit protein bL9 (149 aa).

Belongs to the bacterial ribosomal protein bL9 family.

Binds to the 23S rRNA. This Laribacter hongkongensis (strain HLHK9) protein is Large ribosomal subunit protein bL9.